Consider the following 94-residue polypeptide: MPKKDIHPNWYPDAKVICNGEVVMTTGSTQPEIHVDVWSGNHPFFTGTQKILDTEGRVDRFMRKYGMANPDEDSTKNTKSSKKETSEDSSSKGS.

The interval 64–94 (KYGMANPDEDSTKNTKSSKKETSEDSSSKGS) is disordered. Residues 73–94 (DSTKNTKSSKKETSEDSSSKGS) show a composition bias toward basic and acidic residues.

The protein belongs to the bacterial ribosomal protein bL31 family. Type A subfamily. Part of the 50S ribosomal subunit.

Binds the 23S rRNA. This chain is Large ribosomal subunit protein bL31, found in Prochlorococcus marinus (strain SARG / CCMP1375 / SS120).